We begin with the raw amino-acid sequence, 339 residues long: MCSLRLLLSDSYDPWFNLSLEEYIYKNIPKKQSILFLWRNQNTVVIGRAQNAWKECNTRRMERDGIKLARRNSGGGAVFHDLGNTCFTFISTQEHYDKSISSNIVLNGLSYIGIKAIISGRNDIVIRTENGEHRKISGSAYRETSGRKFHHGTLLLHVDIDKLDYYLNPDFKKLETKGITSIRSRVANLNELKPGINHQEVCLGLTEAFFQHYGMKVKPEILSTDNFCKIPEFFKQFNKQSDWNWNFGSAPAFTHQLDTRFDWGSVTLHCDIERGIIHRSHIFTDSLDPSPLEILAKKLVGIPYNNKSILCCCKEWMQSWPQYKKELSEVSHWLIKTIS.

A BPL/LPL catalytic domain is found at 29–217; it reads PKKQSILFLW…AFFQHYGMKV (189 aa). ATP is bound by residues R71, 76–79, and K135; that span reads GAVF. K135 is a binding site for (R)-lipoate.

It belongs to the LplA family. In terms of assembly, monomer.

Its subcellular location is the cytoplasm. The catalysed reaction is L-lysyl-[lipoyl-carrier protein] + (R)-lipoate + ATP = N(6)-[(R)-lipoyl]-L-lysyl-[lipoyl-carrier protein] + AMP + diphosphate + H(+). Its pathway is protein modification; protein lipoylation via exogenous pathway; protein N(6)-(lipoyl)lysine from lipoate: step 1/2. The protein operates within protein modification; protein lipoylation via exogenous pathway; protein N(6)-(lipoyl)lysine from lipoate: step 2/2. Its function is as follows. Catalyzes both the ATP-dependent activation of exogenously supplied lipoate to lipoyl-AMP and the transfer of the activated lipoyl onto the lipoyl domains of lipoate-dependent enzymes. The polypeptide is Lipoate-protein ligase A (Blochmanniella pennsylvanica (strain BPEN)).